Here is a 352-residue protein sequence, read N- to C-terminus: Mannonate dehydratase (352 aa).

Belongs to the mannonate dehydratase family. It depends on Fe(2+) as a cofactor. Requires Mn(2+) as cofactor.

The enzyme catalyses D-mannonate = 2-dehydro-3-deoxy-D-gluconate + H2O. It participates in carbohydrate metabolism; pentose and glucuronate interconversion. In terms of biological role, catalyzes the dehydration of D-mannonate. The chain is Mannonate dehydratase from Paraburkholderia phytofirmans (strain DSM 17436 / LMG 22146 / PsJN) (Burkholderia phytofirmans).